A 124-amino-acid chain; its full sequence is Small ribosomal subunit protein uS11 (124 aa).

It belongs to the universal ribosomal protein uS11 family. Part of the 30S ribosomal subunit.

Located on the platform of the 30S subunit. This chain is Small ribosomal subunit protein uS11, found in Methanococcus aeolicus (strain ATCC BAA-1280 / DSM 17508 / OCM 812 / Nankai-3).